Here is a 90-residue protein sequence, read N- to C-terminus: Probable Fe(2+)-trafficking protein (90 aa).

The protein belongs to the Fe(2+)-trafficking protein family.

Its function is as follows. Could be a mediator in iron transactions between iron acquisition and iron-requiring processes, such as synthesis and/or repair of Fe-S clusters in biosynthetic enzymes. This chain is Probable Fe(2+)-trafficking protein, found in Halorhodospira halophila (strain DSM 244 / SL1) (Ectothiorhodospira halophila (strain DSM 244 / SL1)).